A 154-amino-acid polypeptide reads, in one-letter code: Deoxyuridine 5'-triphosphate nucleotidohydrolase (154 aa).

Residues 64-66, Asn-77, 81-83, and Lys-91 contribute to the substrate site; these read RSG and TVD. Residues 135–154 form a disordered region; it reads LADTTRGDGGHGSSGGHASL. The span at 144–154 shows a compositional bias: gly residues; that stretch reads GHGSSGGHASL.

The protein belongs to the dUTPase family. As to quaternary structure, homotrimer. Requires Mg(2+) as cofactor.

It carries out the reaction dUTP + H2O = dUMP + diphosphate + H(+). It functions in the pathway pyrimidine metabolism; dUMP biosynthesis; dUMP from dCTP (dUTP route): step 2/2. Its function is as follows. This enzyme is involved in nucleotide metabolism: it produces dUMP, the immediate precursor of thymidine nucleotides and it decreases the intracellular concentration of dUTP so that uracil cannot be incorporated into DNA. In Mycolicibacterium vanbaalenii (strain DSM 7251 / JCM 13017 / BCRC 16820 / KCTC 9966 / NRRL B-24157 / PYR-1) (Mycobacterium vanbaalenii), this protein is Deoxyuridine 5'-triphosphate nucleotidohydrolase.